The following is a 979-amino-acid chain: Disks large-associated protein 3 (979 aa).

Basic and acidic residues predominate over residues 1–10; the sequence is MRGYHGDRGS. Disordered regions lie at residues 1-20, 52-95, 136-169, 182-291, 400-429, and 537-581; these read MRGY…FADQ, AGLG…MYPG, FHTL…SPSR, AKSH…CLEG, AMGD…TRRS, and FRKA…RCSS. Position 58 is a phosphoserine (serine 58). Over residues 73–86 the composition is skewed to gly residues; that stretch reads PEGGPAGAGVGGGS. A compositionally biased stretch (basic and acidic residues) spans 190–202; the sequence is PGKRDYNGPKAEG. Residues 203-218 show a composition bias toward gly residues; sequence RGGSGGDSYPGPGSGG. The segment covering 221 to 246 has biased composition (basic residues); sequence TSHHHHHHHHHHHHQSRHGKRSKSKD. Residues serine 406, serine 409, serine 412, and serine 416 each carry the phosphoserine modification. Residues 540–549 are compositionally biased toward pro residues; the sequence is APPPIPPGSQ. Serine 643 and serine 645 each carry phosphoserine. Disordered regions lie at residues 741 to 790 and 908 to 940; these read EGYP…RASP and EEKK…DRQR. Composition is skewed to basic and acidic residues over residues 769–779 and 927–940; these read GRRDSWIERGS and PVKE…DRQR. Phosphoserine is present on residues serine 932, serine 935, and serine 967.

The protein belongs to the SAPAP family. As to quaternary structure, interacts with DLG4/PSD-95.

It is found in the cell membrane. It localises to the postsynaptic density. The protein resides in the synapse. Its function is as follows. May play a role in the molecular organization of synapses and neuronal cell signaling. Could be an adapter protein linking ion channel to the subsynaptic cytoskeleton. May induce enrichment of PSD-95/SAP90 at the plasma membrane. In Homo sapiens (Human), this protein is Disks large-associated protein 3 (DLGAP3).